We begin with the raw amino-acid sequence, 520 residues long: Kelch domain-containing protein 4 (520 aa).

Residues 1–10 (MGKKGKKEKK) are compositionally biased toward basic residues. The disordered stretch occupies residues 1–33 (MGKKGKKEKKGRGAEKTAAKMEKKVSKRSRKEE). Residues 11–24 (GRGAEKTAAKMEKK) are compositionally biased toward basic and acidic residues. Kelch repeat units follow at residues 77-129 (ELIL…VVPQ), 133-187 (QLWV…AWKR), 188-241 (QLIL…VTPQ), 243-289 (GIVV…MNPS), and 308-361 (QTLF…RRGR). 3 disordered regions span residues 346 to 379 (QLKG…AGTQ), 402 to 431 (LTAP…GPCP), and 481 to 520 (DPET…GAED). Ser413 and Ser418 each carry phosphoserine. The stretch at 443 to 494 (VLYVYGGMFEAGDRQVTLSDLHCLDLHRMEAWKALVEMDPETQEWLEETDSE) is one Kelch 6 repeat.

The sequence is that of Kelch domain-containing protein 4 (KLHDC4) from Homo sapiens (Human).